The sequence spans 343 residues: Ribosomal RNA small subunit methyltransferase C (343 aa).

The protein belongs to the methyltransferase superfamily. RsmC family. In terms of assembly, monomer.

It localises to the cytoplasm. The enzyme catalyses guanosine(1207) in 16S rRNA + S-adenosyl-L-methionine = N(2)-methylguanosine(1207) in 16S rRNA + S-adenosyl-L-homocysteine + H(+). Functionally, specifically methylates the guanine in position 1207 of 16S rRNA in the 30S particle. The chain is Ribosomal RNA small subunit methyltransferase C from Escherichia coli O81 (strain ED1a).